Here is an 812-residue protein sequence, read N- to C-terminus: Phospholipase D alpha 2 (812 aa).

Positions 1 to 36 (MAQHLLHGTLHATIYEVDALHTGGLRSAGFLGKIIS) are excised as a propeptide. The 127-residue stretch at 1 to 127 (MAQHLLHGTL…INGEEVEKWV (127 aa)) folds into the C2 domain. The PLD phosphodiesterase 1 domain occupies 328 to 368 (AMFTHHQKIVVVDSEVPSQGGGSEMRRIMSFVGGIDLCDGR). Residues H333, K335, and D340 contribute to the active site. Residue H333 coordinates a 1,2-diacyl-sn-glycero-3-phosphate. A Ca(2+)-binding site is contributed by H374. The a 1,2-diacyl-sn-glycero-3-phosphate site is built by Q524 and H663. Positions 658–685 (FMIYVHSKMMIVDDEYIIVGSANINQRS) constitute a PLD phosphodiesterase 2 domain. Active-site residues include H663, K665, and D670. E724 contributes to the Ca(2+) binding site.

The protein belongs to the phospholipase D family. C2-PLD subfamily. Ca(2+) is required as a cofactor.

It is found in the cytoplasm. It localises to the membrane. The catalysed reaction is a 1,2-diacyl-sn-glycero-3-phosphocholine + H2O = a 1,2-diacyl-sn-glycero-3-phosphate + choline + H(+). Hydrolyzes glycerol-phospholipids at the terminal phosphodiesteric bond. Plays an important role in various cellular processes, including phytohormone action, vesicular trafficking, secretion, cytoskeletal arrangement, meiosis, tumor promotion, pathogenesis, membrane deterioration and senescence. The protein is Phospholipase D alpha 2 (PLD2) of Brassica oleracea var. capitata (Cabbage).